The sequence spans 836 residues: Protein-glutamine gamma-glutamyltransferase K (836 aa).

The segment covering 1–33 (MDGPRSDMGRSDVSRSDMSRSDMGRSDMGRSDV) has biased composition (basic and acidic residues). 2 disordered regions span residues 1-68 (MDGP…SRGG) and 89-125 (DDWG…DGTI). T46 is modified (phosphothreonine). A phosphoserine mark is found at S48, S98, and S112. Basic and acidic residues predominate over residues 89-112 (DDWGREPSDSRDRGSSSRGGRPDS). Active-site residues include C397, H456, and D479. Ca(2+) contacts are provided by N519, D521, E568, and E573. Position 824 is a phosphoserine (S824).

The protein belongs to the transglutaminase superfamily. Transglutaminase family. In terms of assembly, interacts with PLAAT4. Ca(2+) serves as cofactor. Palmitoylated. In terms of processing, the membrane anchorage region possesses a cluster of five cysteines within which fatty acid(s) may become thioester-linked. It is subject to phorbol ester-stimulated phosphorylation and is hypersensitive to proteolysis, which releases the enzyme in a soluble form. Post-translationally, tyrosine-phosphorylated.

The protein localises to the membrane. It catalyses the reaction L-glutaminyl-[protein] + L-lysyl-[protein] = [protein]-L-lysyl-N(6)-5-L-glutamyl-[protein] + NH4(+). Inhibited by retinoic acid, but phorbol ester treatment activates it. Functionally, catalyzes the cross-linking of proteins and the conjugation of polyamines to proteins. Responsible for cross-linking epidermal proteins during formation of the stratum corneum. Involved in cell proliferation. In Oryctolagus cuniculus (Rabbit), this protein is Protein-glutamine gamma-glutamyltransferase K (TGM1).